Here is a 226-residue protein sequence, read N- to C-terminus: PKHD-type hydroxylase TERTU_2553 (226 aa).

The 100-residue stretch at Lys-78 to Ser-177 folds into the Fe2OG dioxygenase domain. Fe cation-binding residues include His-96, Asp-98, and His-158. A 2-oxoglutarate-binding site is contributed by Arg-168.

Fe(2+) is required as a cofactor. L-ascorbate serves as cofactor.

This Teredinibacter turnerae (strain ATCC 39867 / T7901) protein is PKHD-type hydroxylase TERTU_2553.